A 496-amino-acid chain; its full sequence is MVLAGLLLLLTLLAGAHLLWGRWKLRNLHLPPLVPGFLHLLQPNLPIHLLSLTQKLGPVYRLRLGLQEVVVLNSKRTIEEAMIRKWVDFAGRPQIPSYKLVSQRCQDISLGDYSLLWKAHKKLTRSALLLGTRSSMEPWVDQLTQEFCERMRVQAGAPVTIQKEFSLLTCSIICYLTFGNKEDTLVHAFHDCVQDLMKTWDHWSIQILDMVPFLRFFPNPGLWRLKQAIENRDHMVEKQLTRHKESMVAGQWRDMTDYMLQGVGRQRVEEGPGQLLEGHVHMSVVDLFIGGTETTASTLSWAVAFLLHHPEIQRRLQEELDRELGPGASCSRVTYKDRARLPLLNATIAEVLRLRPVVPLALPHRTTRPSSIFGYDIPEGMVVIPNLQGAHLDETVWEQPHEFRPDRFLEPGANPSALAFGCGARVCLGESLARLELFVVLLRLLQAFTLLPPPVGALPSLQPDPYCGVNLKVQPFQVRLQPRGVEAGAWESASAQ.

S109 contacts heme b. 17alpha-hydroxyprogesterone is bound at residue R232. R232 serves as a coordination point for progesterone. Residues H364, R425, and C427 each coordinate heme b.

Belongs to the cytochrome P450 family. Heme b serves as cofactor.

The protein localises to the endoplasmic reticulum membrane. The protein resides in the microsome membrane. It carries out the reaction progesterone + reduced [NADPH--hemoprotein reductase] + O2 = 21-hydroxyprogesterone + oxidized [NADPH--hemoprotein reductase] + H2O + H(+). It catalyses the reaction 17alpha-hydroxyprogesterone + reduced [NADPH--hemoprotein reductase] + O2 = 11-deoxycortisol + oxidized [NADPH--hemoprotein reductase] + H2O + H(+). Functionally, a cytochrome P450 monooxygenase that plays a major role in adrenal steroidogenesis. Catalyzes the hydroxylation at C-21 of progesterone and 17alpha-hydroxyprogesterone to respectively form 11-deoxycorticosterone and 11-deoxycortisol, intermediate metabolites in the biosynthetic pathway of mineralocorticoids and glucocorticoids. Mechanistically, uses molecular oxygen inserting one oxygen atom into a substrate, and reducing the second into a water molecule, with two electrons provided by NADPH via cytochrome P450 reductase (CPR; NADPH-ferrihemoprotein reductase). The protein is Steroid 21-hydroxylase (CYP21) of Bos taurus (Bovine).